The following is a 138-amino-acid chain: Phosphoribosyl-AMP cyclohydrolase (138 aa).

Residue aspartate 84 coordinates Mg(2+). Cysteine 85 serves as a coordination point for Zn(2+). Mg(2+) contacts are provided by aspartate 86 and aspartate 88. Zn(2+)-binding residues include cysteine 102 and cysteine 109.

The protein belongs to the PRA-CH family. As to quaternary structure, homodimer. Mg(2+) is required as a cofactor. Requires Zn(2+) as cofactor.

The protein resides in the cytoplasm. It catalyses the reaction 1-(5-phospho-beta-D-ribosyl)-5'-AMP + H2O = 1-(5-phospho-beta-D-ribosyl)-5-[(5-phospho-beta-D-ribosylamino)methylideneamino]imidazole-4-carboxamide. It participates in amino-acid biosynthesis; L-histidine biosynthesis; L-histidine from 5-phospho-alpha-D-ribose 1-diphosphate: step 3/9. In terms of biological role, catalyzes the hydrolysis of the adenine ring of phosphoribosyl-AMP. In Burkholderia multivorans (strain ATCC 17616 / 249), this protein is Phosphoribosyl-AMP cyclohydrolase.